We begin with the raw amino-acid sequence, 215 residues long: Probable transaldolase (215 aa).

Lys-83 (schiff-base intermediate with substrate) is an active-site residue.

Belongs to the transaldolase family. Type 3B subfamily.

The protein resides in the cytoplasm. It catalyses the reaction D-sedoheptulose 7-phosphate + D-glyceraldehyde 3-phosphate = D-erythrose 4-phosphate + beta-D-fructose 6-phosphate. Its pathway is carbohydrate degradation; pentose phosphate pathway; D-glyceraldehyde 3-phosphate and beta-D-fructose 6-phosphate from D-ribose 5-phosphate and D-xylulose 5-phosphate (non-oxidative stage): step 2/3. In terms of biological role, transaldolase is important for the balance of metabolites in the pentose-phosphate pathway. This is Probable transaldolase from Anaeromyxobacter sp. (strain Fw109-5).